The sequence spans 230 residues: 2-amino-5-formylamino-6-ribosylaminopyrimidin-4(3H)-one 5'-monophosphate deformylase (230 aa).

Fe cation-binding residues include E29, H31, D40, and H109.

The protein belongs to the creatininase superfamily. FAPy deformylase family. In terms of assembly, homodimer. Fe(2+) serves as cofactor. It depends on Zn(2+) as a cofactor.

It carries out the reaction 2-amino-5-formylamino-6-(5-phospho-D-ribosylamino)pyrimidin-4(3H)-one + H2O = 2,5-diamino-6-(1-D-ribosylamino)pyrimidin-4(3H)-one 5'-phosphate + formate + H(+). It participates in cofactor biosynthesis; coenzyme F420 biosynthesis. The protein operates within cofactor biosynthesis; riboflavin biosynthesis. Functionally, catalyzes the hydrolysis of the formamide of 2-amino-5-formylamino-6-ribosylamino-4(3H)-pyrimidinone 5'-monophosphate (FAPy) to form 2,5-diamino-6-ribosylamino-4(3H)-pyrimidinone 5'-phosphate (APy). The polypeptide is 2-amino-5-formylamino-6-ribosylaminopyrimidin-4(3H)-one 5'-monophosphate deformylase (Methanobrevibacter smithii (strain ATCC 35061 / DSM 861 / OCM 144 / PS)).